A 520-amino-acid polypeptide reads, in one-letter code: Chaperone Ric-8B (520 aa).

Residue Ser-468 is modified to Phosphoserine. At Thr-473 the chain carries Phosphothreonine.

The protein belongs to the synembryn family. In terms of assembly, interacts with GDP-bound G(s) G-alpha proteins GNAL and GNAS. Does not interact with G-alpha proteins when they are in complex with subunits beta and gamma.

It is found in the cytoplasm. Its subcellular location is the cell cortex. In terms of biological role, chaperone that specifically binds and folds nascent G(s) G-alpha proteins (GNAS and GNAL) prior to G protein heterotrimer formation, promoting their association with the plasma membrane. Also acts as a guanine nucleotide exchange factor (GEF) for G(s) proteins by stimulating exchange of bound GDP for free GTP. Acts as an important component for odorant signal transduction by mediating GNAL (G(olf)-alpha) folding, thereby promoting-dependent cAMP accumulation in olfactory sensory neurons. In Rattus norvegicus (Rat), this protein is Chaperone Ric-8B (Ric8b).